Consider the following 441-residue polypeptide: Chromosome partition protein MukF (441 aa).

The segment at 208–236 (LDETSGNLRELQDTLNAAGDKLQAQLLRI) is leucine-zipper.

It belongs to the MukF family. In terms of assembly, interacts, and probably forms a ternary complex, with MukE and MukB via its C-terminal region. The complex formation is stimulated by calcium or magnesium. It is required for an interaction between MukE and MukB.

Its subcellular location is the cytoplasm. It localises to the nucleoid. Its function is as follows. Involved in chromosome condensation, segregation and cell cycle progression. May participate in facilitating chromosome segregation by condensation DNA from both sides of a centrally located replisome during cell division. Not required for mini-F plasmid partitioning. Probably acts via its interaction with MukB and MukE. Overexpression results in anucleate cells. It has a calcium binding activity. The protein is Chromosome partition protein MukF of Pasteurella multocida (strain Pm70).